A 25-amino-acid chain; its full sequence is Gamma-conotoxin PiVIIA (25 aa).

Cystine bridges form between cysteine 1–cysteine 15, cysteine 8–cysteine 19, and cysteine 14–cysteine 24. Position 4 is a 4-hydroxyproline (proline 4). A 4-carboxyglutamate mark is found at glutamate 13 and glutamate 20.

This sequence belongs to the conotoxin O2 superfamily. As to expression, expressed by the venom duct.

It is found in the secreted. Micromolar concentrations of PiVIIA increase the magnitude of the macroscopic calcium current in DRG neurons from rat. An increase, even modest of the calcium current, may have a significant impact in the excitability and electrical activity of neurons, and may set up PiVIIA as a member of the pharmacological family of the gamma-conotoxins. The polypeptide is Gamma-conotoxin PiVIIA (Conus princeps (Prince cone)).